Here is a 190-residue protein sequence, read N- to C-terminus: Potassium-transporting ATPase KdpC subunit (190 aa).

The chain crosses the membrane as a helical span at residues 13-33 (LLLILTLITGILYPIVTTGFA).

The protein belongs to the KdpC family. In terms of assembly, the system is composed of three essential subunits: KdpA, KdpB and KdpC.

The protein localises to the cell inner membrane. Part of the high-affinity ATP-driven potassium transport (or Kdp) system, which catalyzes the hydrolysis of ATP coupled with the electrogenic transport of potassium into the cytoplasm. This subunit acts as a catalytic chaperone that increases the ATP-binding affinity of the ATP-hydrolyzing subunit KdpB by the formation of a transient KdpB/KdpC/ATP ternary complex. This is Potassium-transporting ATPase KdpC subunit from Leptospira interrogans serogroup Icterohaemorrhagiae serovar copenhageni (strain Fiocruz L1-130).